A 443-amino-acid polypeptide reads, in one-letter code: Probable glycine dehydrogenase (decarboxylating) subunit 1 (443 aa).

It belongs to the GcvP family. N-terminal subunit subfamily. In terms of assembly, the glycine cleavage system is composed of four proteins: P, T, L and H. In this organism, the P 'protein' is a heterodimer of two subunits.

The enzyme catalyses N(6)-[(R)-lipoyl]-L-lysyl-[glycine-cleavage complex H protein] + glycine + H(+) = N(6)-[(R)-S(8)-aminomethyldihydrolipoyl]-L-lysyl-[glycine-cleavage complex H protein] + CO2. In terms of biological role, the glycine cleavage system catalyzes the degradation of glycine. The P protein binds the alpha-amino group of glycine through its pyridoxal phosphate cofactor; CO(2) is released and the remaining methylamine moiety is then transferred to the lipoamide cofactor of the H protein. In Chloroherpeton thalassium (strain ATCC 35110 / GB-78), this protein is Probable glycine dehydrogenase (decarboxylating) subunit 1.